A 458-amino-acid polypeptide reads, in one-letter code: GTPase Der (458 aa).

EngA-type G domains are found at residues 9–171 and 197–368; these read KTIA…DLNQ and IQVG…ECFS. GTP is bound by residues 15 to 22, 62 to 66, 123 to 126, 203 to 210, 250 to 254, and 314 to 317; these read GQPNVGKS, DTGGM, NKID, GRVNVGKS, DTAGI, and NKWD. One can recognise a KH-like domain in the interval 369 to 453; sequence KRIPTSLLNS…PLILNAKDKK (85 aa).

This sequence belongs to the TRAFAC class TrmE-Era-EngA-EngB-Septin-like GTPase superfamily. EngA (Der) GTPase family. As to quaternary structure, associates with the 50S ribosomal subunit.

Its function is as follows. GTPase that plays an essential role in the late steps of ribosome biogenesis. In Helicobacter pylori (strain ATCC 700392 / 26695) (Campylobacter pylori), this protein is GTPase Der.